The chain runs to 398 residues: MKYAVLIGDGMADYPIDKLGGKTILQAAQTPAMDYIAAHGKIGLAKTIPDGLPAGSDVANMSILGYDPAVYYSGRAPLEAASMGVALASDDVAFRCNLVTIEHGRIKDYSAGHISSEEARILIETLDAELGNEELSFYPGISYRHLLIAKDNLGAETECTPPHDITGKKIEEYLPGGKEGDFFSDLIKKSMIVLELHPVNLRRIEEGKNPANSIWVWGQGSAPKFTPFRELYEKTGAVISAVDLLKGIGVYAGMDVIEVQGATGYLDTNYEGKASAAIEVLKTRDLVFVHVEAPDEAGHEGSIDKKLKAVEDFDSRIVAPILKHAKTSDEPFTILVLPDHPTPISIKTHARDPVPFAVYRTDKTDSDSAEAFDEESAKKGSLGLVKASDLIGILVKAK.

It belongs to the BPG-independent phosphoglycerate mutase family. A-PGAM subfamily.

The enzyme catalyses (2R)-2-phosphoglycerate = (2R)-3-phosphoglycerate. The protein operates within carbohydrate degradation; glycolysis; pyruvate from D-glyceraldehyde 3-phosphate: step 3/5. Catalyzes the interconversion of 2-phosphoglycerate and 3-phosphoglycerate. This Methanosarcina barkeri (strain Fusaro / DSM 804) protein is 2,3-bisphosphoglycerate-independent phosphoglycerate mutase.